We begin with the raw amino-acid sequence, 249 residues long: Fatty acid elongase 5 (249 aa).

3 helical membrane passes run valine 23–leucine 43, valine 68–asparagine 88, and tryptophan 100–leucine 120. Positions histidine 131–histidine 135 match the HxxHH motif motif. Residue histidine 134 is the Nucleophile of the active site. Helical transmembrane passes span isoleucine 138 to glycine 158, alanine 159 to glycine 179, methionine 193 to isoleucine 213, and tryptophan 217 to tyrosine 236.

The protein belongs to the ELO family.

It is found in the membrane. The catalysed reaction is an acyl-CoA + malonyl-CoA + H(+) = a 3-oxoacyl-CoA + CO2 + CoA. It functions in the pathway lipid metabolism; polyunsaturated fatty acid biosynthesis. In terms of biological role, involved in the synthesis of fatty acids. Elongates C20 polyunsaturated fatty acids (PUFAs) with a preference for n-6 PUFAs. The polypeptide is Fatty acid elongase 5 (Leishmania major).